We begin with the raw amino-acid sequence, 320 residues long: Zona pellucida-binding protein 1 (320 aa).

N-linked (GlcNAc...) asparagine glycans are attached at residues Asn-85 and Asn-158.

The protein belongs to the zona pellucida-binding protein Sp38 family.

The protein localises to the cytoplasmic vesicle. It is found in the secretory vesicle. The protein resides in the acrosome. It localises to the secreted. Its subcellular location is the acrosome membrane. Its function is as follows. Plays a role in sperm morphogenesis and in sperm-oocyte interaction during fertilization. The chain is Zona pellucida-binding protein 1 (ZPBP1) from Gallus gallus (Chicken).